The primary structure comprises 227 residues: NADH-quinone oxidoreductase subunit C (227 aa).

Belongs to the complex I 30 kDa subunit family. NDH-1 is composed of 14 different subunits. Subunits NuoB, C, D, E, F, and G constitute the peripheral sector of the complex.

Its subcellular location is the cell inner membrane. The enzyme catalyses a quinone + NADH + 5 H(+)(in) = a quinol + NAD(+) + 4 H(+)(out). Its function is as follows. NDH-1 shuttles electrons from NADH, via FMN and iron-sulfur (Fe-S) centers, to quinones in the respiratory chain. The immediate electron acceptor for the enzyme in this species is believed to be ubiquinone. Couples the redox reaction to proton translocation (for every two electrons transferred, four hydrogen ions are translocated across the cytoplasmic membrane), and thus conserves the redox energy in a proton gradient. The polypeptide is NADH-quinone oxidoreductase subunit C (Legionella pneumophila (strain Corby)).